Here is a 440-residue protein sequence, read N- to C-terminus: Chromosome partition protein MukF (440 aa).

The leucine-zipper stretch occupies residues 208 to 236 (LSETSGTLRELQDTLEAAGDKLQANLLRI).

The protein belongs to the MukF family. As to quaternary structure, interacts, and probably forms a ternary complex, with MukE and MukB via its C-terminal region. The complex formation is stimulated by calcium or magnesium. It is required for an interaction between MukE and MukB.

It localises to the cytoplasm. Its subcellular location is the nucleoid. Its function is as follows. Involved in chromosome condensation, segregation and cell cycle progression. May participate in facilitating chromosome segregation by condensation DNA from both sides of a centrally located replisome during cell division. Not required for mini-F plasmid partitioning. Probably acts via its interaction with MukB and MukE. Overexpression results in anucleate cells. It has a calcium binding activity. This Shigella boydii serotype 18 (strain CDC 3083-94 / BS512) protein is Chromosome partition protein MukF.